The primary structure comprises 236 residues: Orotidine 5'-phosphate decarboxylase (236 aa).

Residues D17, K39, 66-75, T125, R186, Q195, G215, and R216 contribute to the substrate site; that span reads DLKFHDIPNT. The active-site Proton donor is K68.

This sequence belongs to the OMP decarboxylase family. Type 1 subfamily. As to quaternary structure, homodimer.

The enzyme catalyses orotidine 5'-phosphate + H(+) = UMP + CO2. It functions in the pathway pyrimidine metabolism; UMP biosynthesis via de novo pathway; UMP from orotate: step 2/2. In terms of biological role, catalyzes the decarboxylation of orotidine 5'-monophosphate (OMP) to uridine 5'-monophosphate (UMP). The protein is Orotidine 5'-phosphate decarboxylase of Buchnera aphidicola subsp. Acyrthosiphon pisum (strain APS) (Acyrthosiphon pisum symbiotic bacterium).